The following is a 270-amino-acid chain: Phosphatidylglycerol--prolipoprotein diacylglyceryl transferase (270 aa).

A run of 4 helical transmembrane segments spans residues 18–38, 55–75, 90–110, and 115–135; these read ITIY…LWLA, LVLF…VLFE, WQGG…GAVF, and GLSF…GQAI. Residue R137 participates in a 1,2-diacyl-sn-glycero-3-phospho-(1'-sn-glycerol) binding. The next 3 membrane-spanning stretches (helical) occupy residues 177-197, 205-225, and 236-256; these read HPTF…LLWL, GELF…IEGM, and LRAA…LWIV.

This sequence belongs to the Lgt family.

The protein localises to the cell membrane. It catalyses the reaction L-cysteinyl-[prolipoprotein] + a 1,2-diacyl-sn-glycero-3-phospho-(1'-sn-glycerol) = an S-1,2-diacyl-sn-glyceryl-L-cysteinyl-[prolipoprotein] + sn-glycerol 1-phosphate + H(+). Its pathway is protein modification; lipoprotein biosynthesis (diacylglyceryl transfer). Functionally, catalyzes the transfer of the diacylglyceryl group from phosphatidylglycerol to the sulfhydryl group of the N-terminal cysteine of a prolipoprotein, the first step in the formation of mature lipoproteins. The sequence is that of Phosphatidylglycerol--prolipoprotein diacylglyceryl transferase from Geobacillus kaustophilus (strain HTA426).